Here is a 413-residue protein sequence, read N- to C-terminus: MKTAVEKIFSDKSGNDARAGDYVIANLDYVMVNDITGPIAIDAFNELGYKPLSDRIVVIPDHFVPPKDINSAIQYKKVKDFALKHNTHFYDLGRGGVCHQVMMEKGFAAPGRLIAGADSHTNTYGALSCVSVGIGSTEAGVIFGTGRMWFKVPETDLIRINGRPKKGVYGKDIILNVLSRIGNGGSAYKCMEFTGSTIDYLDINERMTMANMTTEAGAKCSFFNADEKTLDYIRNKTNDYKIYKDDENAEYSRIIDIDASEIEPSVAIPNSPDNVRPVSKVSERIDQAYIGSCTNGRIEDIRRAALILKDKKIDKNVRLMVVPASQEVYNQALKEGLVDIITDAGGYFAGTTCGACLGGYMGVLGPGETCISTTNRNFIGRMGDRTSRVYLANPEVVAASAIMGRIASPEEIQ.

Residues C293, C353, and C356 each coordinate [4Fe-4S] cluster.

It belongs to the aconitase/IPM isomerase family. LeuC type 2 subfamily. In terms of assembly, heterodimer of LeuC and LeuD. [4Fe-4S] cluster serves as cofactor.

The enzyme catalyses (2R,3S)-3-isopropylmalate = (2S)-2-isopropylmalate. It participates in amino-acid biosynthesis; L-leucine biosynthesis; L-leucine from 3-methyl-2-oxobutanoate: step 2/4. Its function is as follows. Catalyzes the isomerization between 2-isopropylmalate and 3-isopropylmalate, via the formation of 2-isopropylmaleate. The protein is 3-isopropylmalate dehydratase large subunit of Picrophilus torridus (strain ATCC 700027 / DSM 9790 / JCM 10055 / NBRC 100828 / KAW 2/3).